Reading from the N-terminus, the 445-residue chain is Phosphoglucosamine mutase (445 aa).

The active-site Phosphoserine intermediate is Ser99. Residues Ser99, Asp242, Asp244, and Asp246 each contribute to the Mg(2+) site. At Ser99 the chain carries Phosphoserine.

The protein belongs to the phosphohexose mutase family. Mg(2+) is required as a cofactor. Post-translationally, activated by phosphorylation.

It catalyses the reaction alpha-D-glucosamine 1-phosphate = D-glucosamine 6-phosphate. Catalyzes the conversion of glucosamine-6-phosphate to glucosamine-1-phosphate. In Campylobacter jejuni subsp. jejuni serotype O:23/36 (strain 81-176), this protein is Phosphoglucosamine mutase.